A 155-amino-acid chain; its full sequence is 3-hydroxyacyl-[acyl-carrier-protein] dehydratase FabZ (155 aa).

The active site involves histidine 59.

Belongs to the thioester dehydratase family. FabZ subfamily.

It is found in the cytoplasm. The enzyme catalyses a (3R)-hydroxyacyl-[ACP] = a (2E)-enoyl-[ACP] + H2O. Functionally, involved in unsaturated fatty acids biosynthesis. Catalyzes the dehydration of short chain beta-hydroxyacyl-ACPs and long chain saturated and unsaturated beta-hydroxyacyl-ACPs. This is 3-hydroxyacyl-[acyl-carrier-protein] dehydratase FabZ from Bartonella quintana (strain Toulouse) (Rochalimaea quintana).